A 110-amino-acid chain; its full sequence is uncharacterized protein (110 aa).

This sequence belongs to the HesB/IscA family.

This is an uncharacterized protein from Rickettsia prowazekii (strain Madrid E).